The following is a 279-amino-acid chain: Acyl-coenzyme A thioesterase MBLAC2 (279 aa).

Serine 2 is subject to N-acetylserine. Residues histidine 83, histidine 85, aspartate 87, histidine 88, histidine 170, aspartate 189, and histidine 231 each contribute to the Zn(2+) site. Cysteine 254 carries the S-palmitoyl cysteine lipid modification.

Belongs to the metallo-beta-lactamase superfamily. Glyoxalase II family. Zn(2+) is required as a cofactor. In terms of processing, palmitoylated on Cys-254 by ZDHHC20.

The protein localises to the endoplasmic reticulum membrane. The protein resides in the cell membrane. It catalyses the reaction hexadecanoyl-CoA + H2O = hexadecanoate + CoA + H(+). The catalysed reaction is dodecanoyl-CoA + H2O = dodecanoate + CoA + H(+). The enzyme catalyses tetradecanoyl-CoA + H2O = tetradecanoate + CoA + H(+). It carries out the reaction octadecanoyl-CoA + H2O = octadecanoate + CoA + H(+). It catalyses the reaction a beta-lactam + H2O = a substituted beta-amino acid. In terms of biological role, acyl-CoA thioesterases are a group of enzymes that catalyze the hydrolysis of acyl-CoAs to the free fatty acid and coenzyme A (CoASH), providing the potential to regulate intracellular levels of acyl-CoAs, free fatty acids and CoASH. Has an acyl-CoA thioesterase activity towards the long chain fatty acyl-CoA thioester palmitoyl-CoA (hexadecanoyl-CoA; C16:0-CoA). Displays a substrate preference for fatty acyl-CoAs with chain-lengths C12-C18. The polypeptide is Acyl-coenzyme A thioesterase MBLAC2 (MBLAC2) (Bos taurus (Bovine)).